The following is a 256-amino-acid chain: PGL/p-HBAD biosynthesis glycosyltransferase Mb2981 (256 aa).

Belongs to the glycosyltransferase 2 family.

Involved in glycosylation steps downstream of mono-O-methyl-glycosyl-p-hydroxybenzoic acid derivative (p-HBAD I) and 2-O-methyl-rhamnosyl-phenolphthiocerol dimycocerosate (mycoside B) during the p-hydroxybenzoic acid derivatives (p-HBAD) and glycosylated phenolphthiocerol dimycocerosates (PGL) biosynthesis. The polypeptide is PGL/p-HBAD biosynthesis glycosyltransferase Mb2981 (Mycobacterium bovis (strain ATCC BAA-935 / AF2122/97)).